A 418-amino-acid chain; its full sequence is Probable basic-leucine zipper transcription factor E (418 aa).

Residues 8–47 (IQQIQQLHMLLQQQQQQQQQQQQQQQQQQQQLQQQNFQLT) adopt a coiled-coil conformation. Low complexity-rich tracts occupy residues 51–71 (FQIP…NNNN) and 95–134 (INTT…NNNT). Disordered regions lie at residues 51–75 (FQIP…ETAF), 95–149 (INTT…KKQK), 165–196 (PTAA…TTNT), and 211–252 (KNQE…KNRR). Positions 169-179 (VKKKPPAKKSA) are enriched in basic residues. Low complexity predominate over residues 180–196 (KNAASQPTSPTLSTTNT). A compositionally biased stretch (acidic residues) spans 220 to 239 (DNSEESDSDEEDFENGDNEN). One can recognise a bZIP domain in the interval 246 to 309 (GDRKNRRLLK…QLMKDKVRYL (64 aa)). Positions 248–268 (RKNRRLLKNREAAQLFRQRQK) are basic motif. The segment at 274–281 (LESKASSL) is leucine-zipper. A coiled-coil region spans residues 324 to 362 (SVVNQDNINNLNNNLNGLQNQQNNNNNNNNNNNNNNNNN). A disordered region spans residues 336–418 (NNLNGLQNQQ…DSLLFNLPPD (83 aa)).

It belongs to the bZIP family.

The protein localises to the nucleus. Functionally, probable transcriptional regulator. This Dictyostelium discoideum (Social amoeba) protein is Probable basic-leucine zipper transcription factor E (bzpE).